We begin with the raw amino-acid sequence, 177 residues long: Antigen TyF1 (177 aa).

Belongs to the Dps family. Homodecamer.

The sequence is that of Antigen TyF1 from Treponema pallidum subsp. pertenue (Yaws treponeme).